Here is a 721-residue protein sequence, read N- to C-terminus: DNA ligase (721 aa).

Over residues 1–19 (MTAKKQGAQASASAPSGDS) the composition is skewed to low complexity. The tract at residues 1–23 (MTAKKQGAQASASAPSGDSPAER) is disordered. NAD(+) is bound by residues 48–52 (DADYD), 97–98 (SL), and Glu162. The active-site N6-AMP-lysine intermediate is the Lys164. NAD(+)-binding residues include Arg185, Glu221, Lys338, and Lys362. Cys456, Cys459, Cys474, and Cys480 together coordinate Zn(2+). Positions 639–721 (RAPLPLAGKT…LKLLAEVGAA (83 aa)) constitute a BRCT domain.

It belongs to the NAD-dependent DNA ligase family. LigA subfamily. Mg(2+) serves as cofactor. Requires Mn(2+) as cofactor.

It carries out the reaction NAD(+) + (deoxyribonucleotide)n-3'-hydroxyl + 5'-phospho-(deoxyribonucleotide)m = (deoxyribonucleotide)n+m + AMP + beta-nicotinamide D-nucleotide.. DNA ligase that catalyzes the formation of phosphodiester linkages between 5'-phosphoryl and 3'-hydroxyl groups in double-stranded DNA using NAD as a coenzyme and as the energy source for the reaction. It is essential for DNA replication and repair of damaged DNA. This is DNA ligase from Cupriavidus metallidurans (strain ATCC 43123 / DSM 2839 / NBRC 102507 / CH34) (Ralstonia metallidurans).